We begin with the raw amino-acid sequence, 411 residues long: Phosphoglycerate kinase (411 aa).

Substrate-binding positions include 28–30, R45, 68–71, R125, and R165; these read DIN and HQSR. Residues E338 and 364-367 contribute to the ATP site; that span reads GGHL.

Belongs to the phosphoglycerate kinase family. In terms of assembly, homodimer.

It localises to the cytoplasm. It catalyses the reaction (2R)-3-phosphoglycerate + ATP = (2R)-3-phospho-glyceroyl phosphate + ADP. The protein operates within carbohydrate degradation; glycolysis; pyruvate from D-glyceraldehyde 3-phosphate: step 2/5. The sequence is that of Phosphoglycerate kinase (pgk) from Methanothermobacter thermautotrophicus (strain ATCC 29096 / DSM 1053 / JCM 10044 / NBRC 100330 / Delta H) (Methanobacterium thermoautotrophicum).